Reading from the N-terminus, the 106-residue chain is Iron-sulfur cluster assembly protein CyaY (106 aa).

It belongs to the frataxin family.

Its function is as follows. Involved in iron-sulfur (Fe-S) cluster assembly. May act as a regulator of Fe-S biogenesis. The chain is Iron-sulfur cluster assembly protein CyaY from Serratia proteamaculans (strain 568).